The chain runs to 225 residues: uncharacterized protein (225 aa).

A helical transmembrane segment spans residues 12 to 32; that stretch reads AGFMMIFVFVIASFLLVLLFF.

It localises to the cell membrane. This is an uncharacterized protein from Bacillus subtilis (strain 168).